The primary structure comprises 173 residues: Regulatory protein RecX (173 aa).

Belongs to the RecX family.

Its subcellular location is the cytoplasm. Modulates RecA activity. The chain is Regulatory protein RecX from Mycobacterium avium (strain 104).